A 389-amino-acid polypeptide reads, in one-letter code: Alpha-(1,3)-fucosyltransferase 7 (389 aa).

Topologically, residues 1 to 55 (MPTPCPPACLSTPGTHRLLPFPDWKAPSWESRKEATCNSSSPGPWAEPTVQGYHP) are cytoplasmic. The helical; Signal-anchor for type II membrane protein transmembrane segment at 56 to 78 (TRRLRAWGGLAGGATFMVIWFFW) threads the bilayer. Residues 79 to 389 (LWGSAPGSAP…YEDLESWFQA (311 aa)) lie on the Lumenal side of the membrane. Cysteines 115 and 123 form a disulfide. Asparagine 128 carries N-linked (GlcNAc...) asparagine glycosylation. The cysteines at positions 258 and 261 are disulfide-linked. An N-linked (GlcNAc...) asparagine glycan is attached at asparagine 338. Cysteine 365 and cysteine 368 are oxidised to a cystine.

Belongs to the glycosyltransferase 10 family. Post-translationally, N-glycosylated. Highly expressed in lung and bone marrow and to a much lesser extent in spleen, salivary gland and skeletal muscle.

It is found in the golgi apparatus. The protein localises to the golgi stack membrane. The catalysed reaction is an N-acetyl-alpha-neuraminyl-(2-&gt;3)-beta-D-galactosyl-(1-&gt;4)-N-acetyl-beta-D-glucosaminyl derivative + GDP-beta-L-fucose = an alpha-Neu5Ac-(2-&gt;3)-beta-D-Gal-(1-&gt;4)-[alpha-L-Fuc-(1-&gt;3)]-beta-D-GlcNAc derivative + GDP + H(+). It carries out the reaction an alpha-Neu5Ac-(2-&gt;3)-beta-D-Gal-(1-&gt;4)-beta-D-GlcNAc6S derivative + GDP-beta-L-fucose = an alpha-Neu5Ac-(2-&gt;3)-beta-D-Gal-(1-&gt;4)-[alpha-L-Fuc-(1-&gt;3)]-beta-D-GlcNAc6S derivative + GDP + H(+). It catalyses the reaction a neolactoside IV(3)-alpha-NeuAc-nLc4Cer + GDP-beta-L-fucose = a neolactoside IV(3)-alpha-NeuNAc,III(3)-alpha-Fuc-nLc4Cer + GDP + H(+). The enzyme catalyses a neolactoside VI(3)-alpha-NeuNAc-nLc6Cer + GDP-beta-L-fucose = a neolactoside VI(3)-alpha-NeuAc,V(3)-alphaFuc-nLc6Cer + GDP + H(+). The catalysed reaction is an alpha-Neu5Ac-(2-&gt;3)-beta-D-Gal-(1-&gt;4)-beta-D-GlcNAc-(1-&gt;3)-beta-D-Gal-(1-&gt;4)-[alpha-L-Fuc-(1-&gt;3)]-beta-D-GlcNAc derivative + GDP-beta-L-fucose = an alpha-Neu5Ac-(2-&gt;3)-beta-D-Gal-(1-&gt;4)-[alpha-L-Fuc-(1-&gt;3)]-beta-D-GlcNAc-(1-&gt;3)-beta-D-Gal-(1-&gt;4)-[alpha-L-Fuc-(1-&gt;3)]-beta-D-GlcNAc derivative + GDP + H(+). It carries out the reaction alpha-Neu5Ac-(2-&gt;3)-beta-D-Gal-(1-&gt;4)-beta-D-GlcNAc-(1-&gt;3)-beta-D-Gal-(1-&gt;4)-D-Glc + GDP-beta-L-fucose = alpha-Neu5Ac-(2-&gt;3)-beta-D-Gal-(1-&gt;4)-[alpha-L-Fuc-(1-&gt;3)]-beta-D-GlcNAc-(1-&gt;3)-beta-D-Gal-(1-&gt;4)-D-Glc + GDP + H(+). It catalyses the reaction alpha-Neu5Ac-(2-&gt;3)-beta-D-Gal-(1-&gt;4)-beta-D-GlcNAc-(1-&gt;3)-beta-D-Gal-(1-&gt;4)-[alpha-L-Fuc-(1-&gt;3)]-beta-D-GlcNAc-(1-&gt;3)-beta-D-Gal-(1-&gt;4)-beta-D-GlcNAc + GDP-beta-L-fucose = alpha-Neu5Ac-(2-&gt;3)-beta-D-Gal-(1-&gt;4)-[alpha-L-Fuc-(1-&gt;3)]-beta-D-GlcNAc-(1-&gt;3)-beta-D-Gal-(1-&gt;4)-[alpha-L-Fuc-(1-&gt;3)]-beta-D-GlcNAc-(1-&gt;3)-beta-D-Gal-(1-&gt;4)-beta-D-GlcNAc + GDP + H(+). The enzyme catalyses alpha-Neu5Ac-(2-&gt;3)-beta-D-Gal-(1-&gt;4)-beta-D-GlcNAc-(1-&gt;3)-beta-D-Gal-(1-&gt;4)-beta-D-GlcNAc-(1-&gt;3)-beta-D-Gal-(1-&gt;4)-beta-D-GlcNAc + GDP-beta-L-fucose = alpha-Neu5Ac-(2-&gt;3)-beta-D-Gal-(1-&gt;4)-[alpha-L-Fuc-(1-&gt;3)]-beta-D-GlcNAc-(1-&gt;3)-beta-D-Gal-(1-&gt;4)-beta-D-GlcNAc-(1-&gt;3)-beta-D-Gal-(1-&gt;4)-beta-D-GlcNAc + GDP + H(+). The protein operates within protein modification; protein glycosylation. With respect to regulation, inhibited by NaCl. Inhibited by GDP in a concentration dependent manner, with an IC(50) value of 93 uM. Also inhibited by GMP and GTP. Inhibited by N-ethylmaleimide. Activated by poly(ethylene glycol) by enhancing the thermal stability of FUT7. Activated by Mn2+, Ca2+, and Mg2+. Both panosialin A and B inhibit activity with IC(50) values of 4.8 and 5.3 ug/ml, respectively. Inhibited by gallic acid (GA) and (-)-epigallocatechin gallate (EGCG) in a time-dependent and irreversible manner with IC(50) values of 60 and 700 nM, respectively. Functionally, catalyzes the transfer of L-fucose, from a guanosine diphosphate-beta-L-fucose, to the N-acetyl glucosamine (GlcNAc) of a distal alpha2,3 sialylated lactosamine unit of a glycoprotein or a glycolipid-linked sialopolylactosamines chain through an alpha-1,3 glycosidic linkage and participates in the final fucosylation step in the biosynthesis of the sialyl Lewis X (sLe(x)), a carbohydrate involved in cell and matrix adhesion during leukocyte trafficking and fertilization. In vitro, also synthesizes sialyl-dimeric-Lex structures, from VIM-2 structures and both di-fucosylated and trifucosylated structures from mono-fucosylated precursors. However does not catalyze alpha 1-3 fucosylation when an internal alpha 1-3 fucosylation is present in polylactosamine chain and the fucosylation rate of the internal GlcNAc residues is reduced once fucose has been added to the distal GlcNAc. Also catalyzes the transfer of a fucose from GDP-beta-fucose to the 6-sulfated a(2,3)sialylated substrate to produce 6-sulfo sLex mediating significant L-selectin-dependent cell adhesion. Through sialyl-Lewis(x) biosynthesis, can control SELE- and SELP-mediated cell adhesion with leukocytes and allows leukocytes tethering and rolling along the endothelial tissue thereby enabling the leukocytes to accumulate at a site of inflammation. May enhance embryo implantation through sialyl Lewis X (sLeX)-mediated adhesion of embryo cells to endometrium. May affect insulin signaling by up-regulating the phosphorylation and expression of some signaling molecules involved in the insulin-signaling pathway through SLe(x) which is present on the glycans of the INSRR alpha subunit. The sequence is that of Alpha-(1,3)-fucosyltransferase 7 from Mus musculus (Mouse).